The chain runs to 115 residues: Large ribosomal subunit protein bL21 (115 aa).

It belongs to the bacterial ribosomal protein bL21 family. As to quaternary structure, part of the 50S ribosomal subunit. Contacts protein L20.

This protein binds to 23S rRNA in the presence of protein L20. The sequence is that of Large ribosomal subunit protein bL21 from Picosynechococcus sp. (strain ATCC 27264 / PCC 7002 / PR-6) (Agmenellum quadruplicatum).